A 331-amino-acid polypeptide reads, in one-letter code: D-lactate dehydrogenase (331 aa).

NAD(+)-binding positions include 155-156, aspartate 175, 206-207, asparagine 212, 233-235, and aspartate 259; these read HI, VP, and AAR. Residue arginine 235 is part of the active site. Glutamate 264 is a catalytic residue. Residue histidine 296 is the Proton donor of the active site.

Belongs to the D-isomer specific 2-hydroxyacid dehydrogenase family. In terms of assembly, homodimer.

The catalysed reaction is (R)-lactate + NAD(+) = pyruvate + NADH + H(+). In Leuconostoc mesenteroides subsp. cremoris, this protein is D-lactate dehydrogenase.